A 287-amino-acid polypeptide reads, in one-letter code: Large ribosomal subunit protein uL2 (287 aa).

The interval Arg221–Ser287 is disordered. The segment covering Lys258–Ser287 has biased composition (basic residues).

The protein belongs to the universal ribosomal protein uL2 family. As to quaternary structure, part of the 50S ribosomal subunit. Forms a bridge to the 30S subunit in the 70S ribosome.

One of the primary rRNA binding proteins. Required for association of the 30S and 50S subunits to form the 70S ribosome, for tRNA binding and peptide bond formation. It has been suggested to have peptidyltransferase activity; this is somewhat controversial. Makes several contacts with the 16S rRNA in the 70S ribosome. In Synechococcus sp. (strain CC9311), this protein is Large ribosomal subunit protein uL2.